Here is a 106-residue protein sequence, read N- to C-terminus: ATP-dependent Clp protease adapter protein ClpS (106 aa).

The protein belongs to the ClpS family. In terms of assembly, binds to the N-terminal domain of the chaperone ClpA.

Its function is as follows. Involved in the modulation of the specificity of the ClpAP-mediated ATP-dependent protein degradation. The protein is ATP-dependent Clp protease adapter protein ClpS of Escherichia fergusonii (strain ATCC 35469 / DSM 13698 / CCUG 18766 / IAM 14443 / JCM 21226 / LMG 7866 / NBRC 102419 / NCTC 12128 / CDC 0568-73).